The chain runs to 262 residues: MTYLAKILKEKRREVAAIKAERPLARYLELRSSLAPARGFQEALRGEDGRLRLIAEVKKASPSRGVIVHDFDPVRIALHYEEIGASALSVLTDRQFFQGSPDYLRAVSAAVRLPVLRKDFIVDESQIFESRLMGADAILLIVAALEPRQLRDYLQTASETGLDVLVEVHDRRELDTAAEEGATMIGVNNRNLKDFSVDPATSSDLRPFFPPDTIAVSESGLKTAGDIAHLRDAGFHAVLIGEGLQTSKELTGLTWPVSHSLS.

This sequence belongs to the TrpC family.

It catalyses the reaction 1-(2-carboxyphenylamino)-1-deoxy-D-ribulose 5-phosphate + H(+) = (1S,2R)-1-C-(indol-3-yl)glycerol 3-phosphate + CO2 + H2O. Its pathway is amino-acid biosynthesis; L-tryptophan biosynthesis; L-tryptophan from chorismate: step 4/5. The polypeptide is Indole-3-glycerol phosphate synthase (Chlorobium luteolum (strain DSM 273 / BCRC 81028 / 2530) (Pelodictyon luteolum)).